A 716-amino-acid chain; its full sequence is MARMSFVIAACQLVLGLLMTSLTESSIQNSECPQLCVCEIRPWFTPQSTYREATTVDCNDLRLTRIPSNLSSDTQVLLLQSNNIAKTVDELQQLFNLTELDFSQNNFTNIKEVGLANLTQLTTLHLEENQITEMTDYCLQDLSNLQELYINHNQISTISAHAFAGLKNLLRLHLNSNKLKVIDSRWFDSTPNLEILMIGENPVIGILDMNFKPLANLRSLVLAGMYLTDIPGNALVGLDSLESLSFYDNKLVKVPQLALQKVPNLKFLDLNKNPIHKIQEGDFKNMLRLKELGINNMGELVSVDRYALDNLPELTKLEATNNPKLSYIHRLAFRSVPALESLMLNNNALNAIYQKTVESLPNLREISIHSNPLRCDCVIHWINSNKTNIRFMEPLSMFCAMPPEYKGHQVKEVLIQDSSEQCLPMISHDSFPNRLNVDIGTTVFLDCRAMAEPEPEIYWVTPIGNKITVETLSDKYKLSSEGTLEISNIQIEDSGRYTCVAQNVQGADTRVATIKVNGTLLDGTQVLKIYVKQTESHSILVSWKVNSNVMTSNLKWSSATMKIDNPHITYTARVPVDVHEYNLTHLQPSTDYEVCLTVSNIHQQTQKSCVNVTTKNAAFAVDISDQETSTALAAVMGSMFAVISLASIAVYFAKRFKRKNYHHSLKKYMQKTSSIPLNELYPPLINLWEGDSEKDKDGSADTKPTQVDTSRSYYMW.

The first 25 residues, 1-25 (MARMSFVIAACQLVLGLLMTSLTES), serve as a signal peptide directing secretion. The LRRNT domain occupies 26 to 72 (SIQNSECPQLCVCEIRPWFTPQSTYREATTVDCNDLRLTRIPSNLSS). At 26–631 (SIQNSECPQL…DISDQETSTA (606 aa)) the chain is on the extracellular side. 11 LRR repeats span residues 73–95 (DTQV…QQLF), 96–117 (NLTE…GLAN), 120–141 (QLTT…CLQD), 144–165 (NLQE…AFAG), 168–189 (NLLR…WFDS), 192–213 (NLEI…NFKP), 216–237 (NLRS…ALVG), 240–261 (SLES…ALQK), 264–285 (NLKF…DFKN), 313–335 (ELTK…AFRS), and 338–359 (ALES…TVES). N-linked (GlcNAc...) asparagine glycans are attached at residues Asn96 and Asn117. The region spanning 371–424 (NPLRCDCVIHWINSNKTNIRFMEPLSMFCAMPPEYKGHQVKEVLIQDSSEQCLP) is the LRRCT domain. N-linked (GlcNAc...) asparagine glycosylation occurs at Asn385. The 92-residue stretch at 424–515 (PMISHDSFPN…GADTRVATIK (92 aa)) folds into the Ig-like C2-type domain. Cysteines 447 and 499 form a disulfide. A glycan (N-linked (GlcNAc...) asparagine) is linked at Asn517. A Fibronectin type-III domain is found at 525-617 (QVLKIYVKQT…SCVNVTTKNA (93 aa)). The chain crosses the membrane as a helical span at residues 632 to 652 (LAAVMGSMFAVISLASIAVYF). The Cytoplasmic portion of the chain corresponds to 653–716 (AKRFKRKNYH…VDTSRSYYMW (64 aa)). Residues 691-700 (DSEKDKDGSA) are compositionally biased toward basic and acidic residues. Residues 691–716 (DSEKDKDGSADTKPTQVDTSRSYYMW) form a disordered region. A compositionally biased stretch (polar residues) spans 702-716 (TKPTQVDTSRSYYMW).

Its subcellular location is the membrane. This chain is Leucine-rich repeat neuronal protein 1 (LRRN1), found in Homo sapiens (Human).